A 141-amino-acid polypeptide reads, in one-letter code: Large ribosomal subunit protein uL11 (141 aa).

It belongs to the universal ribosomal protein uL11 family. As to quaternary structure, part of the ribosomal stalk of the 50S ribosomal subunit. Interacts with L10 and the large rRNA to form the base of the stalk. L10 forms an elongated spine to which L12 dimers bind in a sequential fashion forming a multimeric L10(L12)X complex. One or more lysine residues are methylated.

Functionally, forms part of the ribosomal stalk which helps the ribosome interact with GTP-bound translation factors. In Oceanobacillus iheyensis (strain DSM 14371 / CIP 107618 / JCM 11309 / KCTC 3954 / HTE831), this protein is Large ribosomal subunit protein uL11.